A 544-amino-acid chain; its full sequence is Peptide chain release factor 3 (544 aa).

The region spanning 17–286 (EKRRNFAIIS…SFLDYGLAPR (270 aa)) is the tr-type G domain. Residues 26 to 33 (SHPDAGKT), 94 to 98 (DTPGH), and 148 to 151 (NKMD) contribute to the GTP site.

This sequence belongs to the TRAFAC class translation factor GTPase superfamily. Classic translation factor GTPase family. PrfC subfamily.

The protein localises to the cytoplasm. Increases the formation of ribosomal termination complexes and stimulates activities of RF-1 and RF-2. It binds guanine nucleotides and has strong preference for UGA stop codons. It may interact directly with the ribosome. The stimulation of RF-1 and RF-2 is significantly reduced by GTP and GDP, but not by GMP. In Microcystis aeruginosa (strain NIES-843 / IAM M-2473), this protein is Peptide chain release factor 3.